Consider the following 177-residue polypeptide: Large ribosomal subunit protein uL6 (177 aa).

Belongs to the universal ribosomal protein uL6 family. As to quaternary structure, part of the 50S ribosomal subunit.

Functionally, this protein binds to the 23S rRNA, and is important in its secondary structure. It is located near the subunit interface in the base of the L7/L12 stalk, and near the tRNA binding site of the peptidyltransferase center. In Sinorhizobium fredii (strain NBRC 101917 / NGR234), this protein is Large ribosomal subunit protein uL6.